The following is a 193-amino-acid chain: Guanylate kinase (193 aa).

In terms of domain architecture, Guanylate kinase-like spans 12–191; it reads DLLTIVAGPT…AANELWLAMN (180 aa). 19-26 serves as a coordination point for ATP; that stretch reads GPTAVGKG.

Belongs to the guanylate kinase family.

Its subcellular location is the cytoplasm. It catalyses the reaction GMP + ATP = GDP + ADP. In terms of biological role, essential for recycling GMP and indirectly, cGMP. The polypeptide is Guanylate kinase (Tropheryma whipplei (strain TW08/27) (Whipple's bacillus)).